A 443-amino-acid chain; its full sequence is Thymidine phosphorylase (443 aa).

It belongs to the thymidine/pyrimidine-nucleoside phosphorylase family. Homodimer.

It carries out the reaction thymidine + phosphate = 2-deoxy-alpha-D-ribose 1-phosphate + thymine. It participates in pyrimidine metabolism; dTMP biosynthesis via salvage pathway; dTMP from thymine: step 1/2. In terms of biological role, the enzymes which catalyze the reversible phosphorolysis of pyrimidine nucleosides are involved in the degradation of these compounds and in their utilization as carbon and energy sources, or in the rescue of pyrimidine bases for nucleotide synthesis. In Shewanella piezotolerans (strain WP3 / JCM 13877), this protein is Thymidine phosphorylase.